Reading from the N-terminus, the 643-residue chain is E3 ubiquitin-protein ligase AMFR (643 aa).

Transmembrane regions (helical) follow at residues 82-102 (LFVW…AKLI), 122-142 (FWNF…VQTV), 186-206 (VLSL…VCCV), 215-235 (TLAF…HVIL), 254-274 (GTYV…LDLM), and 276-296 (HIHM…VIFM). An RING-type zinc finger spans residues 341–379 (CAICWDSMQAARKLPCGHLFHNSCLRSWLEQDTSCPTCR). A helical membrane pass occupies residues 429–449 (IASWLPSFSVEVMHTTNILGI). A CUE domain is found at 456-498 (QLNAMAHQIQEMFPQVPYHLVLQDLQMTRSVEITTDNILEGRI). The disordered stretch occupies residues 504–535 (TQRSDSLRPALNSPVERPSPDLEEGEASVQTE). Residues serine 516 and serine 542 each carry the phosphoserine modification. The tract at residues 598 to 624 (LNKSSEDDGASERLLPSEGTSSDPVTL) is disordered. A VCP/p97-interacting motif (VIM) region spans residues 622-640 (VTLRRRMLAAAAERRLQRQ).

In terms of assembly, interacts with RNF5. Also forms an ERAD complex containing VCP/p97, NGLY1; PSMC1; SAKS1 and RAD23B required for coupling retrotranslocation, ubiquitination and deglycosylation. Interacts with DERL1. Interacts (through a region distinct from the RING finger) with UBE2G2/UBC7. Component of the VCP/p97-AMFR/gp78 complex that enhances VCP/p97 binding to polyubiquitinated proteins for their degradation by the endoplasmic reticulum-associated degradation (ERAD) pathway. Interacts (via the VIM) with VCP/p97. Interacts (via its membrane domain) with INSIG1; the interaction initiates the sterol-mediated ubiquitination and degradation of HMGCR by the ERAD pathway. Interacts with AUP1, UBE2G2 and RNF139/TRC8; interaction with AUP1 facilitates interaction of AMFR with ubiquitin-conjugating enzyme UBE2G2 and ubiquitin ligase RNF139, leading to sterol-induced ubiquitination of HNGCR and its subsequent proteasomal degradation. Interacts with BAG6. Interacts with USP13 (via UBA 2 domain); the interaction is direct. Interacts with LMBR1L, UBAC2 and CTNNB1. Interacts with C18orf32. Post-translationally, palmitoylation of the RING-type zing finger by ZDHHC6 promotes localization to the peripheral endoplasmic reticulum. As to expression, expressed in heart, brain, liver, lung, skeletal muscle, kidney and testis. Not detected in spleen.

It is found in the endoplasmic reticulum membrane. The enzyme catalyses [E2 ubiquitin-conjugating enzyme]-S-ubiquitinyl-L-cysteine + [acceptor protein]-L-cysteine = [E2 ubiquitin-conjugating enzyme]-L-cysteine + [acceptor protein]-S-ubiquitinyl-L-cysteine.. Its pathway is protein modification; protein ubiquitination. E3 ubiquitin-protein ligase that mediates the polyubiquitination of lysine and cysteine residues on target proteins, such as CD3D, CYP3A4, CFTR, INSIG1, SOAT2/ACAT2 and APOB for proteasomal degradation. Component of a VCP/p97-AMFR/gp78 complex that participates in the final step of endoplasmic reticulum-associated degradation (ERAD). The VCP/p97-AMFR/gp78 complex is involved in the sterol-accelerated ERAD degradation of HMGCR through binding to the HMGCR-INSIG1 complex at the ER membrane. In addition, interaction of AMFR with AUP1 facilitates interaction of AMFR with ubiquitin-conjugating enzyme UBE2G2 and ubiquitin ligase RNF139, leading to sterol-induced HMGCR ubiquitination. The ubiquitinated HMGCR is then released from the ER by the complex into the cytosol for subsequent destruction. In addition to ubiquitination on lysine residues, catalyzes ubiquitination on cysteine residues: together with INSIG1, mediates polyubiquitination of SOAT2/ACAT2 at 'Cys-277', leading to its degradation when the lipid levels are low. Catalyzes ubiquitination and subsequent degradation of INSIG1 when cells are depleted of sterols. Mediates polyubiquitination of INSIG2 at 'Cys-215' in some tissues, leading to its degradation. Also regulates ERAD through the ubiquitination of UBL4A a component of the BAG6/BAT3 complex. Also acts as a scaffold protein to assemble a complex that couples ubiquitination, retranslocation and deglycosylation. Mediates tumor invasion and metastasis as a receptor for the GPI/autocrine motility factor. In association with LMBR1L and UBAC2, negatively regulates the canonical Wnt signaling pathway in the lymphocytes by promoting the ubiquitin-mediated degradation of CTNNB1 and Wnt receptors FZD6 and LRP6. Regulates NF-kappa-B and MAPK signaling pathways by mediating 'Lys-27'-linked polyubiquitination of TAB3 and promoting subsequent TAK1/MAP3K7 activation. In Mus musculus (Mouse), this protein is E3 ubiquitin-protein ligase AMFR (Amfr).